Here is a 112-residue protein sequence, read N- to C-terminus: MLQTKNSQEIKLNWYETVYLIKSDLNEDRTLCIINEYKSMLTNGGAKNIILQHRGRRHLSYSIKDYRDGIYVQVNYEGNGKLVQSFEKSLRFDENIIRYLTNKQNKDNKIEG.

The protein belongs to the bacterial ribosomal protein bS6 family.

The protein localises to the plastid. It localises to the chloroplast. Its function is as follows. Binds together with bS18 to 16S ribosomal RNA. This chain is Small ribosomal subunit protein bS6c (rps6), found in Porphyra purpurea (Red seaweed).